The sequence spans 795 residues: Phenylalanine--tRNA ligase beta subunit (795 aa).

The 110-residue stretch at 39 to 148 folds into the tRNA-binding domain; it reads AGTFNGVVVG…LDAPIGTDLR (110 aa). A B5 domain is found at 401 to 476; it reads PKVNTVQLRR…RIYGYNSIPN (76 aa). Residues aspartate 454, aspartate 460, glutamate 463, and glutamate 464 each coordinate Mg(2+). The FDX-ACB domain maps to 701-794; the sequence is SKFPANRRDL…VKQRFNAELR (94 aa).

It belongs to the phenylalanyl-tRNA synthetase beta subunit family. Type 1 subfamily. Tetramer of two alpha and two beta subunits. Mg(2+) serves as cofactor.

It is found in the cytoplasm. The enzyme catalyses tRNA(Phe) + L-phenylalanine + ATP = L-phenylalanyl-tRNA(Phe) + AMP + diphosphate + H(+). The sequence is that of Phenylalanine--tRNA ligase beta subunit (pheT) from Haemophilus influenzae (strain ATCC 51907 / DSM 11121 / KW20 / Rd).